We begin with the raw amino-acid sequence, 104 residues long: Large ribosomal subunit protein uL24 (104 aa).

The protein belongs to the universal ribosomal protein uL24 family. As to quaternary structure, part of the 50S ribosomal subunit.

In terms of biological role, one of two assembly initiator proteins, it binds directly to the 5'-end of the 23S rRNA, where it nucleates assembly of the 50S subunit. Its function is as follows. One of the proteins that surrounds the polypeptide exit tunnel on the outside of the subunit. The polypeptide is Large ribosomal subunit protein uL24 (Methylorubrum populi (strain ATCC BAA-705 / NCIMB 13946 / BJ001) (Methylobacterium populi)).